The following is a 344-amino-acid chain: UDP-galactose/UDP-glucose transporter 5B (344 aa).

8 helical membrane passes run 16-36 (LWKG…YGVL), 56-76 (LFLV…ALLA), 115-135 (VQTL…TLIM), 142-162 (FDYL…LFPA), 176-196 (TVWG…TSTF), 220-240 (CVLS…VDFV), 246-266 (CLLD…FISY), and 292-312 (CIWF…IVFG). The tract at residues 324 to 344 (KNSQTQPPPPELPQYEKVESS) is disordered.

Belongs to the nucleotide-sugar transporter family. UDP-galactose:UMP antiporter (TC 2.A.7.11) subfamily.

The protein resides in the membrane. Sugar transporter involved in the transport of nucleotide-sugars from cytoplasm into the Golgi and/or the endoplasmic reticulum. The protein is UDP-galactose/UDP-glucose transporter 5B of Arabidopsis thaliana (Mouse-ear cress).